Reading from the N-terminus, the 278-residue chain is tRNA uridine(34) hydroxylase (278 aa).

A Rhodanese domain is found at 122-216 (QDPDVVVIDT…YLETIAPEES (95 aa)). C176 (cysteine persulfide intermediate) is an active-site residue.

This sequence belongs to the TrhO family.

It carries out the reaction uridine(34) in tRNA + AH2 + O2 = 5-hydroxyuridine(34) in tRNA + A + H2O. Catalyzes oxygen-dependent 5-hydroxyuridine (ho5U) modification at position 34 in tRNAs. In Synechocystis sp. (strain ATCC 27184 / PCC 6803 / Kazusa), this protein is tRNA uridine(34) hydroxylase.